The following is a 449-amino-acid chain: DNA-directed RNA polymerase subunit Rpo1C (449 aa).

Residues 1–68 form a unknown region; it reads MQDVIKKIED…EGEELLKAVE (68 aa). The tract at residues 69–449 is DNA-directed RNA polymerase subunit Rpo1C; the sequence is DEYLRILKVR…TGSVSVIMKK (381 aa).

The protein belongs to the RNA polymerase beta' chain family. As to quaternary structure, part of the RNA polymerase complex.

Its subcellular location is the cytoplasm. The enzyme catalyses RNA(n) + a ribonucleoside 5'-triphosphate = RNA(n+1) + diphosphate. In terms of biological role, DNA-dependent RNA polymerase (RNAP) catalyzes the transcription of DNA into RNA using the four ribonucleoside triphosphates as substrates. Forms part of the jaw domain. The protein is DNA-directed RNA polymerase subunit Rpo1C of Methanothermobacter thermautotrophicus (strain Winter) (Methanobacterium thermoautotrophicum).